We begin with the raw amino-acid sequence, 175 residues long: Ribosome-binding factor A (175 aa).

The segment at 129 to 175 (GAKPAGEADPYRDRGSADEPSDAGGLVIRTSDGLEAENTGDDYQAED) is disordered. Residues 162–175 (LEAENTGDDYQAED) are compositionally biased toward acidic residues.

It belongs to the RbfA family. Monomer. Binds 30S ribosomal subunits, but not 50S ribosomal subunits or 70S ribosomes.

It localises to the cytoplasm. In terms of biological role, one of several proteins that assist in the late maturation steps of the functional core of the 30S ribosomal subunit. Associates with free 30S ribosomal subunits (but not with 30S subunits that are part of 70S ribosomes or polysomes). Required for efficient processing of 16S rRNA. May interact with the 5'-terminal helix region of 16S rRNA. This chain is Ribosome-binding factor A, found in Mycobacterium marinum (strain ATCC BAA-535 / M).